Here is a 478-residue protein sequence, read N- to C-terminus: MARLNRNDPQLVGTLLPTRIEADLFDLEVDGEIPKSINGTFYRNTPEPQVTPQKFHTFIDGDGMASAFHFEDGHVDFISRWVKTARFTAERLARKSLFGMYRNPYTDDTSVKGLDRTVANTSIISHHGKVLAVKEDGLPYELDPRTLETRGRFDYDGQVTSQTHTAHPKYDPETGDLLFFGSAAKGEATPDMAYYIVDKHGKVTHETWFEQPYGAFMHDFAITRNWSIFPIMPATNSLSRLKAKQPIYMWEPELGSYIGVLPRRGQGSQIRWLKAPALWVFHVVNAWEVGTKIYIDLMESEILPFPFPNSQNQPFAPEKAVPRLTRWEIDLDSSSDEIKRTRLHDFFAEMPIMDFRFALQCNRYGFMGVDDPRKPLAHQQAEKIFAYNSLGIWDNHRGDYDLWYSGEASAAQEPAFVPRSPTAAEGDGYLLTVVGRLDENRSDLVILDTQDIQSGPVATIKLPFRLRAALHGCWVPRP.

Residues His167, His218, His282, and His471 each contribute to the Fe cation site.

Belongs to the carotenoid oxygenase family. It depends on Fe(2+) as a cofactor.

It carries out the reaction (E)-isoeugenol + O2 = vanillin + acetaldehyde. Inhibited by Co(2+), Ni(2+) and Zn(2+), which may inhibit enzyme activity by replacing iron in the catalytic residues. Inhibited by incubation with high concentrations of the iron chelators 1,10-phenanthroline and Tiron. However, iron is not completely removed by the chelators, suggesting that iron is tightly bound to the enzyme. In terms of biological role, involved in isoeugenol degradation. Catalyzes the oxidative cleavage of the side chain double-bond of isoeugenol to form vanillin and acetaldehyde. This chain is Isoeugenol monooxygenase, found in Pseudomonas nitroreducens.